Reading from the N-terminus, the 311-residue chain is T-cell acute lymphocytic leukemia protein 1 homolog (311 aa).

Positions 1–14 (MTMDRPPAPPPPSS) are enriched in pro residues. Residues 1–67 (MTMDRPPAPP…RPSPGPPAAA (67 aa)) are disordered. Residues 15–25 (DPRDARRHDPE) are compositionally biased toward basic and acidic residues. Residues 179 to 231 (VRRIFTNSRERWRQQNVNGAFAELRKLIPTHPPDKKLSKNEILRLAMKYINFL) form the bHLH domain. The segment at 265-311 (SPNSSCGSSLDGAASPDSFTEEHDTLDSKHARNLHHAILPVEGSAQR) is disordered. Residues 284-294 (TEEHDTLDSKH) show a composition bias toward basic and acidic residues.

As to quaternary structure, efficient DNA binding requires dimerization with another bHLH protein. Forms heterodimers with TCF3. In terms of processing, phosphorylated on serine residues.

It is found in the nucleus. Its function is as follows. Implicated in the genesis of hemopoietic malignancies. It may play an important role in hemopoietic differentiation. The protein is T-cell acute lymphocytic leukemia protein 1 homolog (TAL1) of Gallus gallus (Chicken).